The sequence spans 243 residues: Large ribosomal subunit protein uL2 (243 aa).

The interval 202–243 is disordered; the sequence is HGGGRHQHVGQSSTVSRNAPPGAKVGSIAARKTGRAKIKDRR. The span at 233–243 shows a compositional bias: basic residues; it reads KTGRAKIKDRR.

The protein belongs to the universal ribosomal protein uL2 family. As to quaternary structure, part of the 50S ribosomal subunit. Forms a bridge to the 30S subunit in the 70S ribosome.

Its function is as follows. One of the primary rRNA binding proteins. Required for association of the 30S and 50S subunits to form the 70S ribosome, for tRNA binding and peptide bond formation. It has been suggested to have peptidyltransferase activity; this is somewhat controversial. Makes several contacts with the 16S rRNA in the 70S ribosome. The chain is Large ribosomal subunit protein uL2 from Cenarchaeum symbiosum (strain A).